We begin with the raw amino-acid sequence, 1337 residues long: DNA mismatch repair protein Msh6 (1337 aa).

Positions 68-130 constitute a PWWP domain; sequence PGDLVWAKME…IKYLRPYKGS (63 aa). The tract at residues 170–310 is disordered; it reads AVCSEPSDTE…SEAPKRAAPV (141 aa). The segment covering 176–187 has biased composition (acidic residues); that stretch reads SDTEEAEEEEME. The span at 226–248 shows a compositional bias: basic and acidic residues; the sequence is VLDSDSDRDGSDVEFKPDVKEAS. Acidic residues predominate over residues 257 to 272; it reads DENEATDVETDEESIE. Positions 279–292 are enriched in basic residues; the sequence is PSKRKRGNVSKPSK. Positions 294 to 305 are enriched in basic and acidic residues; that stretch reads SSLENEHSEAPK. 1111 to 1118 is a binding site for ATP; it reads GPNMGGKS.

It belongs to the DNA mismatch repair MutS family.

It localises to the nucleus. Component of the post-replicative DNA mismatch repair system (MMR). Involved in B cell growth by positively regulating B cell proliferation and controlling replication efficiency. Controls cell cycle to prevent re-replication and defects in DNA damage-induced G2 checkpoint. Doesn't seem to counteract or control the immunoglobulin gene conversion (Ig GC) and to contribute to guanine/uracil mismatch repair. In Gallus gallus (Chicken), this protein is DNA mismatch repair protein Msh6.